The following is a 574-amino-acid chain: Pre-mRNA-processing protein 45 (574 aa).

5 disordered regions span residues 1 to 46 (MAAL…WKPK), 203 to 234 (PPRF…TAQD), 350 to 406 (ETGI…SEMR), 478 to 503 (AGSS…SKDR), and 549 to 574 (MDAA…ARDE). Pro residues-rich tracts occupy residues 24 to 33 (APLPTTPGPQ) and 215 to 224 (PAEPPPPVLQ). Over residues 363 to 377 (GSEEESDEEEEDEEA) the composition is skewed to acidic residues. Basic and acidic residues-rich tracts occupy residues 378 to 397 (IRER…KEMR), 493 to 503 (EGIKEEMSKDR), and 558 to 574 (RTAE…ARDE).

It belongs to the SNW family. As to quaternary structure, associated with the spliceosome.

It is found in the nucleus. Its function is as follows. Involved in pre-mRNA splicing. The polypeptide is Pre-mRNA-processing protein 45 (PRP45) (Cryptococcus neoformans var. neoformans serotype D (strain JEC21 / ATCC MYA-565) (Filobasidiella neoformans)).